Consider the following 236-residue polypeptide: 3-oxoacyl-[acyl-carrier-protein] reductase (236 aa).

Residue M1 is modified to N-acetylmethionine. NADP(+)-binding positions include 11–14 (SRGI) and 34–35 (RN). K40 is subject to N6-acetyllysine. Residues D56 and 83 to 85 (AAG) each bind NADP(+). An N6-acetyllysine modification is found at K96. S134 contacts substrate. NADP(+) is bound by residues Y147, K151, and 180–182 (IRT). The Proton acceptor role is filled by Y147. K194 carries the N6-acetyllysine modification.

It belongs to the short-chain dehydrogenases/reductases (SDR) family. As to quaternary structure, homotetramer (in vitro). Heterotetramer with HSD17B8; contains two molecules each of HSD17B8 and CBR4. Does not form homotetramers when HSD17B8 is coexpressed, only heterotetramers (in vitro).

It localises to the mitochondrion matrix. It catalyses the reaction a (3R)-hydroxyacyl-[ACP] + NADP(+) = a 3-oxoacyl-[ACP] + NADPH + H(+). The enzyme catalyses a quinone + NADPH + H(+) = a quinol + NADP(+). Its pathway is lipid metabolism; fatty acid biosynthesis. Its function is as follows. Component of the heterotetramer complex KAR (3-ketoacyl-[acyl carrier protein] reductase or 3-ketoacyl-[ACP] reductase) that forms part of the mitochondrial fatty acid synthase (mtFAS). Beta-subunit of the KAR heterotetramer complex, responsible for the 3-ketoacyl-ACP reductase activity of the mtFAS, reduces 3-oxoacyl-[ACP] to (3R)-hydroxyacyl-[ACP] in a NADPH-dependent manner with no chain length preference, thereby participating in mitochondrial fatty acid biosynthesis. The homotetramer has NADPH-dependent quinone reductase activity (in vitro), hence could play a role in protection against cytotoxicity of exogenous quinones. As a heterotetramer, it can also reduce 9,10-phenanthrenequinone, 1,4-benzoquinone and various other o-quinones and p-quinones (in vitro). The protein is 3-oxoacyl-[acyl-carrier-protein] reductase (Cbr4) of Mus musculus (Mouse).